The following is a 589-amino-acid chain: Proline--tRNA ligase (589 aa).

The protein belongs to the class-II aminoacyl-tRNA synthetase family. ProS type 1 subfamily. As to quaternary structure, homodimer.

Its subcellular location is the cytoplasm. It carries out the reaction tRNA(Pro) + L-proline + ATP = L-prolyl-tRNA(Pro) + AMP + diphosphate. Its function is as follows. Catalyzes the attachment of proline to tRNA(Pro) in a two-step reaction: proline is first activated by ATP to form Pro-AMP and then transferred to the acceptor end of tRNA(Pro). As ProRS can inadvertently accommodate and process non-cognate amino acids such as alanine and cysteine, to avoid such errors it has two additional distinct editing activities against alanine. One activity is designated as 'pretransfer' editing and involves the tRNA(Pro)-independent hydrolysis of activated Ala-AMP. The other activity is designated 'posttransfer' editing and involves deacylation of mischarged Ala-tRNA(Pro). The misacylated Cys-tRNA(Pro) is not edited by ProRS. This Nocardioides sp. (strain ATCC BAA-499 / JS614) protein is Proline--tRNA ligase.